The following is a 1132-amino-acid chain: Tyrosine-protein kinase JAK2 (1132 aa).

An interaction with cytokine/interferon/growth hormone receptors region spans residues 1–239 (MGMACLTMTE…RYRFRRFIQQ (239 aa)). Residues 37–380 (PVLQVYLYHS…GYYRLTADAH (344 aa)) enclose the FERM domain. Tyrosine 119 is modified (phosphotyrosine; by autocatalysis). Phosphotyrosine is present on residues tyrosine 372 and tyrosine 373. In terms of domain architecture, SH2; atypical spans 401–482 (HGPISMDFAI…SLKDLLNCYQ (82 aa)). Phosphoserine is present on serine 523. One can recognise a Protein kinase 1 domain in the interval 545–809 (LIFNESLGQG…AVIRDLNSLF (265 aa)). Phosphotyrosine is present on residues tyrosine 570 and tyrosine 813. The 278-residue stretch at 849-1126 (LKFLQQLGKG…RDLSLRVDQI (278 aa)) folds into the Protein kinase 2 domain. Position 855 to 863 (855 to 863 (LGKGNFGSV)) interacts with ATP. Residue tyrosine 868 is modified to Phosphotyrosine; by autocatalysis. Lysine 882 contacts ATP. Tyrosine 966 and tyrosine 972 each carry phosphotyrosine; by autocatalysis. The active-site Proton acceptor is aspartate 976. Tyrosine 1007 and tyrosine 1008 each carry phosphotyrosine; by autocatalysis.

This sequence belongs to the protein kinase superfamily. Tyr protein kinase family. JAK subfamily. Interacts with IL23R, SKB1 and STAM2. Interacts with EPOR. Interacts with LYN. Interacts with SIRPA. Interacts with SH2B1. Interacts with TEC. Interacts with IFNGR2 (via intracellular domain). Interacts with LEPR (Isoform B). Interacts with HSP90AB1; promotes functional activation in a heat shock-dependent manner. Interacts with STRA6. Interacts with ASB2; the interaction targets JAK2 for Notch-induced proteasomal degradation. The cofactor is Mg(2+). Post-translationally, autophosphorylated, leading to regulate its activity. Leptin promotes phosphorylation on tyrosine residues, including phosphorylation on Tyr-813. Autophosphorylation on Tyr-119 in response to EPO down-regulates its kinase activity. Autophosphorylation on Tyr-868, Tyr-966 and Tyr-972 in response to growth hormone (GH) are required for maximal kinase activity. Also phosphorylated by TEC. Phosphorylated on tyrosine residues in response to interferon gamma signaling. Phosphorylated on tyrosine residues in response to a signaling cascade that is activated by increased cellular retinol. Undergoes Notch-induced ubiquitination and subsequent proteasomal degradation which is mediated by ASB1 or ASB2, the substrate-recognition components of probable ECS E3 ubiquitin-protein ligase complexes. As to expression, ubiquitously expressed throughout most tissues.

The protein resides in the endomembrane system. The protein localises to the cytoplasm. It is found in the nucleus. It catalyses the reaction L-tyrosyl-[protein] + ATP = O-phospho-L-tyrosyl-[protein] + ADP + H(+). Its activity is regulated as follows. Regulated by autophosphorylation, can both activate or decrease activity. Heme regulates its activity by enhancing the phosphorylation on Tyr-1007 and Tyr-1008. In terms of biological role, non-receptor tyrosine kinase involved in various processes such as cell growth, development, differentiation or histone modifications. Mediates essential signaling events in both innate and adaptive immunity. In the cytoplasm, plays a pivotal role in signal transduction via its association with type I receptors such as growth hormone (GHR), prolactin (PRLR), leptin (LEPR), erythropoietin (EPOR), thrombopoietin (THPO); or type II receptors including IFN-alpha, IFN-beta, IFN-gamma and multiple interleukins. Following ligand-binding to cell surface receptors, phosphorylates specific tyrosine residues on the cytoplasmic tails of the receptor, creating docking sites for STATs proteins. Subsequently, phosphorylates the STATs proteins once they are recruited to the receptor. Phosphorylated STATs then form homodimer or heterodimers and translocate to the nucleus to activate gene transcription. For example, cell stimulation with erythropoietin (EPO) during erythropoiesis leads to JAK2 autophosphorylation, activation, and its association with erythropoietin receptor (EPOR) that becomes phosphorylated in its cytoplasmic domain. Then, STAT5 (STAT5A or STAT5B) is recruited, phosphorylated and activated by JAK2. Once activated, dimerized STAT5 translocates into the nucleus and promotes the transcription of several essential genes involved in the modulation of erythropoiesis. Part of a signaling cascade that is activated by increased cellular retinol and that leads to the activation of STAT5 (STAT5A or STAT5B). In addition, JAK2 mediates angiotensin-2-induced ARHGEF1 phosphorylation. Plays a role in cell cycle by phosphorylating CDKN1B. Cooperates with TEC through reciprocal phosphorylation to mediate cytokine-driven activation of FOS transcription. In the nucleus, plays a key role in chromatin by specifically mediating phosphorylation of 'Tyr-41' of histone H3 (H3Y41ph), a specific tag that promotes exclusion of CBX5 (HP1 alpha) from chromatin. Up-regulates the potassium voltage-gated channel activity of KCNA3. This Rattus norvegicus (Rat) protein is Tyrosine-protein kinase JAK2.